A 373-amino-acid chain; its full sequence is Dual-specificity RNA methyltransferase RlmN (373 aa).

Catalysis depends on glutamate 94, which acts as the Proton acceptor. The 240-residue stretch at 100 to 339 (EDDRATLCVS…VIVRKTRGDD (240 aa)) folds into the Radical SAM core domain. The cysteines at positions 107 and 344 are disulfide-linked. Cysteine 114, cysteine 118, and cysteine 121 together coordinate [4Fe-4S] cluster. Residues 168-169 (GE), serine 200, 222-224 (SIH), and asparagine 301 each bind S-adenosyl-L-methionine. Cysteine 344 serves as the catalytic S-methylcysteine intermediate.

It belongs to the radical SAM superfamily. RlmN family. The cofactor is [4Fe-4S] cluster.

The protein resides in the cytoplasm. The enzyme catalyses adenosine(2503) in 23S rRNA + 2 reduced [2Fe-2S]-[ferredoxin] + 2 S-adenosyl-L-methionine = 2-methyladenosine(2503) in 23S rRNA + 5'-deoxyadenosine + L-methionine + 2 oxidized [2Fe-2S]-[ferredoxin] + S-adenosyl-L-homocysteine. The catalysed reaction is adenosine(37) in tRNA + 2 reduced [2Fe-2S]-[ferredoxin] + 2 S-adenosyl-L-methionine = 2-methyladenosine(37) in tRNA + 5'-deoxyadenosine + L-methionine + 2 oxidized [2Fe-2S]-[ferredoxin] + S-adenosyl-L-homocysteine. Specifically methylates position 2 of adenine 2503 in 23S rRNA and position 2 of adenine 37 in tRNAs. m2A2503 modification seems to play a crucial role in the proofreading step occurring at the peptidyl transferase center and thus would serve to optimize ribosomal fidelity. In Shewanella denitrificans (strain OS217 / ATCC BAA-1090 / DSM 15013), this protein is Dual-specificity RNA methyltransferase RlmN.